A 427-amino-acid chain; its full sequence is Trigger factor (427 aa).

Positions 165 to 250 (GDTVVIDFEG…LHEIQEQVPA (86 aa)) constitute a PPIase FKBP-type domain.

This sequence belongs to the FKBP-type PPIase family. Tig subfamily.

Its subcellular location is the cytoplasm. The catalysed reaction is [protein]-peptidylproline (omega=180) = [protein]-peptidylproline (omega=0). Its function is as follows. Involved in protein export. Acts as a chaperone by maintaining the newly synthesized protein in an open conformation. Functions as a peptidyl-prolyl cis-trans isomerase. This Sulfurovum sp. (strain NBC37-1) protein is Trigger factor.